Consider the following 965-residue polypeptide: Klaroid protein (965 aa).

A disordered region spans residues 1 to 20 (MSENTYQIETRRRSRSKTPF). A run of 2 helical transmembrane segments spans residues 303–323 (TIGGGLASLLRYLYVFIGSVL) and 343–363 (FLIFLLILLPLLLLSGWLLLQ). Positions 585–612 (SSDAEVQIERLNREIAFIKLALSDKQAE) form a coiled coil. Residues 801 to 963 (GGQILSTRCT…YRFRVHGKPP (163 aa)) form the SUN domain.

As to quaternary structure, core component of the LINC complex which is composed of inner nuclear membrane SUN domain-containing proteins coupled to outer nuclear membrane KASH domain-containing nesprins. In terms of tissue distribution, expressed in all cells in the eye disk.

It is found in the membrane. It localises to the cytoplasm. Its subcellular location is the cytoskeleton. The protein resides in the microtubule organizing center. The protein localises to the perinuclear region. Component of the LINC (LInker of Nucleoskeleton and Cytoskeleton) complex involved in the connection between the nuclear lamina and the cytoskeleton. Is required to nuclear migration in eye and to anchor klar in the nuclear membrane. The chain is Klaroid protein from Drosophila melanogaster (Fruit fly).